The following is a 511-amino-acid chain: Alpha-amylase 1 (511 aa).

The signal sequence occupies residues 1–15 (MKFFLLLSLIGFCWA). Gln16 is subject to Pyrrolidone carboxylic acid. Disulfide bonds link Cys43-Cys101, Cys85-Cys130, and Cys156-Cys175. Ca(2+)-binding residues include Asn115, Arg173, and Asp182. Position 210 (Arg210) interacts with chloride. Residue Asp212 is the Nucleophile of the active site. His216 is a binding site for Ca(2+). The Proton donor role is filled by Glu248. The chloride site is built by Asn313 and Arg352. Disulfide bonds link Cys393–Cys399 and Cys465–Cys477.

It belongs to the glycosyl hydrolase 13 family. As to quaternary structure, monomer. Requires Ca(2+) as cofactor. Chloride is required as a cofactor. Expressed in liver and saliva.

The protein localises to the secreted. The enzyme catalyses Endohydrolysis of (1-&gt;4)-alpha-D-glucosidic linkages in polysaccharides containing three or more (1-&gt;4)-alpha-linked D-glucose units.. This chain is Alpha-amylase 1 (Amy1), found in Mus musculus (Mouse).